The sequence spans 398 residues: Succinate--CoA ligase [ADP-forming] subunit beta (398 aa).

The ATP-grasp domain occupies 9 to 254 (KRLLHTYGAP…LTEEDPKEIE (246 aa)). Residues Lys46, 53-55 (GRG), Glu109, Ala112, and Glu117 contribute to the ATP site. Asn209 and Asp223 together coordinate Mg(2+). Substrate-binding positions include Asn274 and 331 to 333 (GIM).

It belongs to the succinate/malate CoA ligase beta subunit family. In terms of assembly, heterotetramer of two alpha and two beta subunits. Requires Mg(2+) as cofactor.

The enzyme catalyses succinate + ATP + CoA = succinyl-CoA + ADP + phosphate. The catalysed reaction is GTP + succinate + CoA = succinyl-CoA + GDP + phosphate. It functions in the pathway carbohydrate metabolism; tricarboxylic acid cycle; succinate from succinyl-CoA (ligase route): step 1/1. Its function is as follows. Succinyl-CoA synthetase functions in the citric acid cycle (TCA), coupling the hydrolysis of succinyl-CoA to the synthesis of either ATP or GTP and thus represents the only step of substrate-level phosphorylation in the TCA. The beta subunit provides nucleotide specificity of the enzyme and binds the substrate succinate, while the binding sites for coenzyme A and phosphate are found in the alpha subunit. The polypeptide is Succinate--CoA ligase [ADP-forming] subunit beta (Brucella abortus (strain S19)).